The primary structure comprises 309 residues: Homoserine kinase (309 aa).

ATP is bound at residue proline 91–cysteine 101.

Belongs to the GHMP kinase family. Homoserine kinase subfamily.

It localises to the cytoplasm. The catalysed reaction is L-homoserine + ATP = O-phospho-L-homoserine + ADP + H(+). Its pathway is amino-acid biosynthesis; L-threonine biosynthesis; L-threonine from L-aspartate: step 4/5. Catalyzes the ATP-dependent phosphorylation of L-homoserine to L-homoserine phosphate. The sequence is that of Homoserine kinase from Salmonella arizonae (strain ATCC BAA-731 / CDC346-86 / RSK2980).